We begin with the raw amino-acid sequence, 321 residues long: Pectinesterase (321 aa).

Position 1 is an N-acetylthreonine (T1). The N-linked (GlcNAc...) (complex) asparagine glycan is linked to N75. 2 residues coordinate substrate: T84 and Q114. Catalysis depends on D137, which acts as the Proton donor. C151 and C171 are joined by a disulfide. Residue D158 is the Nucleophile of the active site. Positions 226 and 228 each coordinate substrate. N-linked (GlcNAc...) (complex) asparagine glycosylation is found at N275, N290, and N319.

It belongs to the pectinesterase family. In terms of processing, the N-glycans attached at Asn-75, Asn-275, Asn-290 and Asn-319 are complex oligosaccharides containing xylose, fucose, hexose and N-acetylglucosamine.

It carries out the reaction [(1-&gt;4)-alpha-D-galacturonosyl methyl ester](n) + n H2O = [(1-&gt;4)-alpha-D-galacturonosyl](n) + n methanol + n H(+). It functions in the pathway glycan metabolism; pectin degradation; 2-dehydro-3-deoxy-D-gluconate from pectin: step 1/5. With respect to regulation, inhibited by PMEI. The protein is Pectinesterase of Actinidia deliciosa (Kiwi).